We begin with the raw amino-acid sequence, 264 residues long: MDTRPIGFLDSGVGGLTVVCELIRQLPHEKIVYIGDSARAPYGPRPKKQIKEYTWELVNFLLTQNVKMIVFACNTATAVAWEEVKAALDIPVLGVVLPGASAAIKSTTKGQVGVIGTPMTVASDIYRKKIQLLAPSVQVRSLACPKFVPIVESNEMCSSIAKKIVYDSLAPLVGKIDTLVLGCTHYPLLRPIIQNVMGPSVKLIDSGAECVRDISVLLNYFDINGNYHQKAVKHRFFTTANPEIFQEIASIWLKQKINVEHVTL.

Substrate is bound by residues aspartate 10–serine 11 and tyrosine 42–glycine 43. The active-site Proton donor/acceptor is cysteine 73. Position 74–75 (asparagine 74–threonine 75) interacts with substrate. Cysteine 183 serves as the catalytic Proton donor/acceptor. Residue threonine 184–histidine 185 coordinates substrate.

It belongs to the aspartate/glutamate racemases family.

It carries out the reaction L-glutamate = D-glutamate. It participates in cell wall biogenesis; peptidoglycan biosynthesis. In terms of biological role, provides the (R)-glutamate required for cell wall biosynthesis. This Streptococcus pyogenes serotype M3 (strain ATCC BAA-595 / MGAS315) protein is Glutamate racemase.